The primary structure comprises 412 residues: Double C2-like domain-containing protein beta (412 aa).

Residues 1-36 (MTLRRRGEKATISIQEHMAIDVCPGPIRPIKQISDY) form a negatively regulates targeting to plasma membrane region. The mediates interaction with DYNLT1 stretch occupies residues 1–90 (MTLRRRGEKA…EDVDQLFGAY (90 aa)). Positions 38–123 (PRFPRGLPPD…PDADGYESDD (86 aa)) are disordered. A compositionally biased stretch (low complexity) spans 49–70 (GPRAAAPPDAPARPAVAGAGRR). The segment covering 95 to 108 (GPSPGPSPARPPAK) has biased composition (pro residues). A compositionally biased stretch (acidic residues) spans 112–123 (DEPDADGYESDD). 2 C2 domains span residues 126–250 (ALGT…SICL) and 266–399 (ERGR…ERWH). The Ca(2+) site is built by Asp-157, Asp-163, Asp-218, Asp-220, Asp-297, Asp-303, Asp-357, Asp-359, and Asp-365. The tract at residues 257 to 375 (DKTEDKSLEE…FIGGVVLGIH (119 aa)) is mediates interaction with STXBP3. Ser-411 carries the post-translational modification Phosphoserine.

Interacts with the SNARE (soluble N-ethylmaleimide-sensitive factor attached protein receptor) complex composed of SNAP25, STX1A and VAMP2; the interaction is calcium-dependent and competitive with SYT1. Interacts with STX4; the interaction is calcium-dependent, increased by insulin and glucose, and mediates vesicle fusion with plasma membrane in pancreatic cells and adipocytes. Interacts with STXBP3; the interaction is direct, occurs at the cell membrane and regulates glucose-stimulated insulin secretion. May interact with UNC13A; the interaction mediates targeting to the plasma membrane. Interacts with cytoplasmic dynein light chain DYNLT1. The cofactor is Ca(2+). In terms of tissue distribution, widely expressed with highest levels in brain and kidney. Expressed in pancreatic islet cells (at protein level).

The protein resides in the cytoplasm. Its subcellular location is the cytoplasmic granule. It is found in the cell membrane. Functionally, calcium sensor which positively regulates SNARE-dependent fusion of vesicles with membranes. Binds phospholipids in a calcium-dependent manner and may act at the priming stage of fusion by modifying membrane curvature to stimulate fusion. Involved in calcium-triggered exocytosis in chromaffin cells and calcium-dependent spontaneous release of neurotransmitter in absence of action potentials in neuronal cells. Involved both in glucose-stimulated insulin secretion in pancreatic cells and insulin-dependent GLUT4 transport to the plasma membrane in adipocytes. In Homo sapiens (Human), this protein is Double C2-like domain-containing protein beta.